The sequence spans 89 residues: MGFKNNLSLVSVMVFALILLPMISGQTMQCYSGIACTDDGTCNDYCNPRNNNLGGVCLRRANCCCCYVSVVKSQESSLSKDTNNVFITN.

The first 25 residues, Met1–Gly25, serve as a signal peptide directing secretion. Disulfide bonds link Cys30–Cys66, Cys36–Cys57, Cys42–Cys64, and Cys46–Cys65.

The protein belongs to the DEFL family.

The protein resides in the secreted. The polypeptide is Putative defensin-like protein 89 (Arabidopsis thaliana (Mouse-ear cress)).